A 380-amino-acid polypeptide reads, in one-letter code: Queuine tRNA-ribosyltransferase (380 aa).

Catalysis depends on aspartate 95, which acts as the Proton acceptor. Residues 95–99, aspartate 149, glutamine 192, and glycine 219 each bind substrate; that span reads DSGGF. The segment at 250–256 is RNA binding; it reads GVGSPDA. The active-site Nucleophile is aspartate 269. The RNA binding; important for wobble base 34 recognition stretch occupies residues 274–278; sequence TRIAR. Zn(2+) contacts are provided by cysteine 307, cysteine 309, cysteine 312, and histidine 338.

Belongs to the queuine tRNA-ribosyltransferase family. Homodimer. Within each dimer, one monomer is responsible for RNA recognition and catalysis, while the other monomer binds to the replacement base PreQ1. Requires Zn(2+) as cofactor.

It carries out the reaction 7-aminomethyl-7-carbaguanine + guanosine(34) in tRNA = 7-aminomethyl-7-carbaguanosine(34) in tRNA + guanine. Its pathway is tRNA modification; tRNA-queuosine biosynthesis. Catalyzes the base-exchange of a guanine (G) residue with the queuine precursor 7-aminomethyl-7-deazaguanine (PreQ1) at position 34 (anticodon wobble position) in tRNAs with GU(N) anticodons (tRNA-Asp, -Asn, -His and -Tyr). Catalysis occurs through a double-displacement mechanism. The nucleophile active site attacks the C1' of nucleotide 34 to detach the guanine base from the RNA, forming a covalent enzyme-RNA intermediate. The proton acceptor active site deprotonates the incoming PreQ1, allowing a nucleophilic attack on the C1' of the ribose to form the product. After dissociation, two additional enzymatic reactions on the tRNA convert PreQ1 to queuine (Q), resulting in the hypermodified nucleoside queuosine (7-(((4,5-cis-dihydroxy-2-cyclopenten-1-yl)amino)methyl)-7-deazaguanosine). This is Queuine tRNA-ribosyltransferase from Latilactobacillus sakei subsp. sakei (strain 23K) (Lactobacillus sakei subsp. sakei).